The chain runs to 73 residues: UPF0346 protein SH1485 (73 aa).

It belongs to the UPF0346 family.

The chain is UPF0346 protein SH1485 from Staphylococcus haemolyticus (strain JCSC1435).